The sequence spans 93 residues: YcgL domain-containing protein KPK_1976 (93 aa).

Positions 1-85 constitute a YcgL domain; sequence MFCVIYRSTK…PSENLLKKHL (85 aa).

In Klebsiella pneumoniae (strain 342), this protein is YcgL domain-containing protein KPK_1976.